The sequence spans 388 residues: Phosphoglycerate kinase (388 aa).

Substrate contacts are provided by residues 24–26, Arg37, 56–59, Arg117, and Arg165; these read DLN and RGGR. Residues 26 to 136 form a disordered region; it reads NVPLDSDGEQ…RRPRNVQGRR (111 aa). A compositionally biased stretch (basic and acidic residues) spans 34–55; the sequence is EQGRITDPGPDHRVGADVERTG. Over residues 102–136 the composition is skewed to basic residues; that stretch reads GGHRRPGPRRGVDRRRRPAAGKHPVRRPRNVQGRR. ATP-binding positions include Lys215, Gly303, Glu334, and 363-366; that span reads GGDS.

The protein belongs to the phosphoglycerate kinase family. As to quaternary structure, monomer.

The protein resides in the cytoplasm. The catalysed reaction is (2R)-3-phosphoglycerate + ATP = (2R)-3-phospho-glyceroyl phosphate + ADP. It participates in carbohydrate degradation; glycolysis; pyruvate from D-glyceraldehyde 3-phosphate: step 2/5. The polypeptide is Phosphoglycerate kinase (pgk) (Mycobacterium avium).